The sequence spans 401 residues: Glucose/mannose transporter GlcP (401 aa).

12 consecutive transmembrane segments (helical) span residues 11-31, 43-63, 78-98, 99-119, 132-152, 156-176, 212-232, 247-267, 278-298, 306-326, 336-356, and 360-380; these read AFFFTVGIIHISTGSLTPFLL, VIIFFQFTGFLSGVLIAPLMI, IMLVALSIFFLTKDWYYIIVM, AFLLGYGAGTLETTVGSFVIA, EVLFGLGALSFPLLINSFIDI, FLPYYCIFTFLFVLFVGWLIF, LGFFVFFAFLYAGIETNFANF, LISVSFFWVGIIIGRILIGFV, LFSCSCLIVLLIAFSYISNPI, LIGLSIAGIFPIALTLASIII, LFIASASFGGAIISFLIGWSL, and TILLTMGIFTTMAVILVGISV.

Belongs to the major facilitator superfamily.

The protein localises to the cell membrane. Can transport glucose, mannose, 2-deoxyglucose and methyl alpha-glucoside, but not galactose. The protein is Glucose/mannose transporter GlcP (glcP) of Bacillus subtilis (strain 168).